We begin with the raw amino-acid sequence, 404 residues long: Protein URE2 (404 aa).

Residues 110–134 (QQQLQQHHHHQQRQQHPNNNVQAGT) are disordered. The GST N-terminal domain maps to 162-246 (EGYTLFSHRS…HVVNKYYRET (85 aa)). One can recognise a GST C-terminal domain in the interval 255–404 (NLADQAQINA…PAVIKALRGE (150 aa)).

This sequence belongs to the GST superfamily. Homodimer.

Its function is as follows. Plays an important role in the cellular response to the nitrogen source. URE2 gene plays a major part in the repression of GLN1 and GDH2 genes by glutamine, and is required for the inactivation of glutamine synthetase. URE2 gene product may catalytically inactivate GLN3 in response to an increase in the intracellular concentration of glutamine. This chain is Protein URE2 (URE2), found in Kluyveromyces marxianus (Yeast).